A 426-amino-acid chain; its full sequence is Glutamyl-tRNA reductase (426 aa).

Residues 49–52 (TCNR), serine 109, 114–116 (EGQ), and glutamine 120 contribute to the substrate site. Cysteine 50 acts as the Nucleophile in catalysis. 189-194 (GAGETG) contributes to the NADP(+) binding site.

The protein belongs to the glutamyl-tRNA reductase family. Homodimer.

The catalysed reaction is (S)-4-amino-5-oxopentanoate + tRNA(Glu) + NADP(+) = L-glutamyl-tRNA(Glu) + NADPH + H(+). It participates in porphyrin-containing compound metabolism; protoporphyrin-IX biosynthesis; 5-aminolevulinate from L-glutamyl-tRNA(Glu): step 1/2. In terms of biological role, catalyzes the NADPH-dependent reduction of glutamyl-tRNA(Glu) to glutamate 1-semialdehyde (GSA). The sequence is that of Glutamyl-tRNA reductase (hemA) from Chlorobaculum parvum (strain DSM 263 / NCIMB 8327) (Chlorobium vibrioforme subsp. thiosulfatophilum).